The sequence spans 520 residues: CBL-interacting serine/threonine-protein kinase 18 (520 aa).

2 disordered regions span residues 1 to 29 (MAQALAQPPLVVTTVVPDPPPPPPPPHPK) and 48 to 67 (TDKDGNISPQSPRSPRSPRN). A compositionally biased stretch (pro residues) spans 17–29 (PDPPPPPPPPHPK). A compositionally biased stretch (low complexity) spans 55-66 (SPQSPRSPRSPR). A Protein kinase domain is found at 74–328 (YELGKLLGHG…IPEIMKNRWF (255 aa)). ATP is bound by residues 80 to 88 (LGHGTFAKV) and Lys-103. Residue Asp-196 is the Proton acceptor of the active site. An activation loop region spans residues 214-243 (DFGLSAVAEQLRQDGLCHTFCGTPAYIAPE). Phosphoserine is present on Ser-218. Position 232 is a phosphothreonine (Thr-232). Residues 349–368 (EDEEEEASSSGRSSTVSESD) are disordered. Over residues 356–366 (SSSGRSSTVSE) the composition is skewed to low complexity. Positions 382–406 (PRPSSLNAFDIISFSSGFDLSGLFE) constitute an NAF domain. Residues 410 to 439 (GEGTRFVSGAPVSKIISKLEEIAKIVSFTV) are PPI.

This sequence belongs to the protein kinase superfamily. CAMK Ser/Thr protein kinase family. SNF1 subfamily. Interacts with CBL1 and CBL9. Mn(2+) is required as a cofactor.

It carries out the reaction L-seryl-[protein] + ATP = O-phospho-L-seryl-[protein] + ADP + H(+). It catalyses the reaction L-threonyl-[protein] + ATP = O-phospho-L-threonyl-[protein] + ADP + H(+). Its function is as follows. CIPK serine-threonine protein kinases interact with CBL proteins. Binding of a CBL protein to the regulatory NAF domain of CIPK protein lead to the activation of the kinase in a calcium-dependent manner. The sequence is that of CBL-interacting serine/threonine-protein kinase 18 (CIPK18) from Arabidopsis thaliana (Mouse-ear cress).